The primary structure comprises 132 residues: Secreted RxLR effector protein BLR08 (132 aa).

The first 22 residues, 1-22 (MRHKCLLAMAVVASMAFYSVIS), serve as a signal peptide directing secretion. N-linked (GlcNAc...) asparagine glycosylation occurs at N25. Residues 36 to 57 (NRRLRPRVEPTANELDKQSDVD) form a disordered region. Residues 37–83 (RRLRPRVEPTANELDKQSDVDTKLEADRRLGYPGESGFMLEGELEER) carry the RxLR-dEER motif. A helical transmembrane segment spans residues 111–131 (FFLGLFASVIGVSIISACYGI).

This sequence belongs to the RxLR effector family. As to quaternary structure, interacts with host transcription factor NAC069.

The protein resides in the secreted. It localises to the host endoplasmic reticulum membrane. Its function is as follows. Secreted effector that inhibits stress-induced relocalization of the transcription factor NAC069 to the nucleus, thus affecting its broad role in abiotic and biotic stress responses. In Bremia lactucae (Lettuce downy mildew), this protein is Secreted RxLR effector protein BLR08.